Consider the following 449-residue polypeptide: Glucose-6-phosphate isomerase (449 aa).

Glu-291 (proton donor) is an active-site residue. Active-site residues include His-312 and Lys-426.

It belongs to the GPI family.

It is found in the cytoplasm. The catalysed reaction is alpha-D-glucose 6-phosphate = beta-D-fructose 6-phosphate. The protein operates within carbohydrate biosynthesis; gluconeogenesis. Its pathway is carbohydrate degradation; glycolysis; D-glyceraldehyde 3-phosphate and glycerone phosphate from D-glucose: step 2/4. Catalyzes the reversible isomerization of glucose-6-phosphate to fructose-6-phosphate. The sequence is that of Glucose-6-phosphate isomerase from Streptococcus pyogenes serotype M49 (strain NZ131).